A 127-amino-acid polypeptide reads, in one-letter code: Protein ApaG (127 aa).

The 125-residue stretch at 3 to 127 (KDKRYAFSVK…FQLNMPRVLH (125 aa)) folds into the ApaG domain.

This is Protein ApaG from Methylobacillus flagellatus (strain ATCC 51484 / DSM 6875 / VKM B-1610 / KT).